Here is a 306-residue protein sequence, read N- to C-terminus: tRNA dimethylallyltransferase 2 (306 aa).

Position 11–18 (11–18 (GPTASGKT)) interacts with ATP. 13 to 18 (TASGKT) provides a ligand contact to substrate. Positions 36–39 (DSRQ) are interaction with substrate tRNA.

It belongs to the IPP transferase family. Monomer. Requires Mg(2+) as cofactor.

The catalysed reaction is adenosine(37) in tRNA + dimethylallyl diphosphate = N(6)-dimethylallyladenosine(37) in tRNA + diphosphate. Functionally, catalyzes the transfer of a dimethylallyl group onto the adenine at position 37 in tRNAs that read codons beginning with uridine, leading to the formation of N6-(dimethylallyl)adenosine (i(6)A). The sequence is that of tRNA dimethylallyltransferase 2 from Bacteroides fragilis (strain ATCC 25285 / DSM 2151 / CCUG 4856 / JCM 11019 / LMG 10263 / NCTC 9343 / Onslow / VPI 2553 / EN-2).